We begin with the raw amino-acid sequence, 440 residues long: Chromosomal replication initiator protein DnaA (440 aa).

A domain I, interacts with DnaA modulators region spans residues 1–93 (MNVQLNEIWN…QTPVKPVAQE (93 aa)). A domain II region spans residues 94-101 (YTEDSNMS). The tract at residues 102-318 (FLNPKYTFDT…GALNRVIAYS (217 aa)) is domain III, AAA+ region. Residues Gly146, Gly148, Lys149, and Thr150 each coordinate ATP. Positions 319–440 (TLTENIINVD…EEIKKNITGG (122 aa)) are domain IV, binds dsDNA.

The protein belongs to the DnaA family. As to quaternary structure, oligomerizes as a right-handed, spiral filament on DNA at oriC.

The protein localises to the cytoplasm. Its function is as follows. Plays an essential role in the initiation and regulation of chromosomal replication. ATP-DnaA binds to the origin of replication (oriC) to initiate formation of the DNA replication initiation complex once per cell cycle. Binds the DnaA box (a 9 base pair repeat at the origin) and separates the double-stranded (ds)DNA. Forms a right-handed helical filament on oriC DNA; dsDNA binds to the exterior of the filament while single-stranded (ss)DNA is stabiized in the filament's interior. The ATP-DnaA-oriC complex binds and stabilizes one strand of the AT-rich DNA unwinding element (DUE), permitting loading of DNA polymerase. After initiation quickly degrades to an ADP-DnaA complex that is not apt for DNA replication. Binds acidic phospholipids. This is Chromosomal replication initiator protein DnaA from Ruminiclostridium cellulolyticum (strain ATCC 35319 / DSM 5812 / JCM 6584 / H10) (Clostridium cellulolyticum).